Here is a 310-residue protein sequence, read N- to C-terminus: Thioredoxin reductase (310 aa).

34–41 (NGMQPGGQ) lines the FAD pocket. Residues Cys-135 and Cys-138 are joined by a disulfide bond. 281–290 (DVQDKIYRQA) contributes to the FAD binding site.

This sequence belongs to the class-II pyridine nucleotide-disulfide oxidoreductase family. As to quaternary structure, homodimer. The cofactor is FAD.

It is found in the cytoplasm. It carries out the reaction [thioredoxin]-dithiol + NADP(+) = [thioredoxin]-disulfide + NADPH + H(+). The polypeptide is Thioredoxin reductase (trxB) (Rickettsia felis (strain ATCC VR-1525 / URRWXCal2) (Rickettsia azadi)).